Here is a 476-residue protein sequence, read N- to C-terminus: Angiotensinogen (476 aa).

The first 24 residues, 1–24, serve as a signal peptide directing secretion; sequence MAPAGLSLGATILCLLAWAGLAAG. Cys-42 and Cys-161 are disulfide-bonded. The disordered stretch occupies residues 45 to 64; sequence LEKPSVETPADPTLTPVPIQ. N-linked (GlcNAc...) asparagine glycosylation is present at Asn-295.

It belongs to the serpin family. In terms of processing, in response to low blood pressure, the enzyme renin/REN cleaves angiotensinogen to produce angiotensin-1. Angiotensin-1 is a substrate of ACE (angiotensin converting enzyme) that removes a dipeptide to yield the physiologically active peptide angiotensin-2. Angiotensin-1 and angiotensin-2 can be further processed to generate angiotensin-3, angiotensin-4. Angiotensin 1-9 is cleaved from angiotensin-1 by ACE2 and can be further processed by ACE to produce angiotensin 1-7, angiotensin 1-5 and angiotensin 1-4. Angiotensin 1-7 has also been proposed to be cleaved from angiotensin-2 by ACE2 or from angiotensin-1 by MME (neprilysin). The disulfide bond is labile. Angiotensinogen is present in the circulation in a near 40:60 ratio with the oxidized disulfide-bonded form, which preferentially interacts with receptor-bound renin.

The protein localises to the secreted. Functionally, essential component of the renin-angiotensin system (RAS), a potent regulator of blood pressure, body fluid and electrolyte homeostasis. Its function is as follows. Acts directly on vascular smooth muscle as a potent vasoconstrictor, affects cardiac contractility and heart rate through its action on the sympathetic nervous system, and alters renal sodium and water absorption through its ability to stimulate the zona glomerulosa cells of the adrenal cortex to synthesize and secrete aldosterone. Acts by binding to angiotensin receptors AGTR1 and AGTR2. Also binds the DEAR/FBXW7-AS1 receptor. Stimulates aldosterone release. In terms of biological role, is a ligand for the G-protein coupled receptor MAS1. Has vasodilator and antidiuretic effects. Has an antithrombotic effect that involves MAS1-mediated release of nitric oxide from platelets. The sequence is that of Angiotensinogen (AGT) from Ovis aries (Sheep).